The primary structure comprises 353 residues: Photosystem II protein D1 (353 aa).

T2 carries the post-translational modification N-acetylthreonine. At T2 the chain carries Phosphothreonine. Helical transmembrane passes span 29–46 (YIGWFGVLMIPTLLTATS), 118–133 (HFLLGVACYMGREWEL), and 142–156 (WIAVAYSAPVAAATA). Residue H118 participates in chlorophyll a binding. Y126 serves as a coordination point for pheophytin a. 2 residues coordinate [CaMn4O5] cluster: D170 and E189. Residues 197–218 (FHMLGVAGVFGGSLFSAMHGSL) traverse the membrane as a helical segment. H198 serves as a coordination point for chlorophyll a. A quinone-binding positions include H215 and 264–265 (SF). H215 provides a ligand contact to Fe cation. H272 is a binding site for Fe cation. A helical transmembrane segment spans residues 274 to 288 (FLAAWPVVGIWFTAL). [CaMn4O5] cluster is bound by residues H332, E333, D342, and A344. Positions 345-353 (AVEAPSTIG) are excised as a propeptide.

The protein belongs to the reaction center PufL/M/PsbA/D family. In terms of assembly, PSII is composed of 1 copy each of membrane proteins PsbA, PsbB, PsbC, PsbD, PsbE, PsbF, PsbH, PsbI, PsbJ, PsbK, PsbL, PsbM, PsbT, PsbX, PsbY, PsbZ, Psb30/Ycf12, at least 3 peripheral proteins of the oxygen-evolving complex and a large number of cofactors. It forms dimeric complexes. The D1/D2 heterodimer binds P680, chlorophylls that are the primary electron donor of PSII, and subsequent electron acceptors. It shares a non-heme iron and each subunit binds pheophytin, quinone, additional chlorophylls, carotenoids and lipids. D1 provides most of the ligands for the Mn4-Ca-O5 cluster of the oxygen-evolving complex (OEC). There is also a Cl(-1) ion associated with D1 and D2, which is required for oxygen evolution. The PSII complex binds additional chlorophylls, carotenoids and specific lipids. is required as a cofactor. Post-translationally, tyr-161 forms a radical intermediate that is referred to as redox-active TyrZ, YZ or Y-Z. C-terminally processed by CTPA; processing is essential to allow assembly of the oxygen-evolving complex and thus photosynthetic growth.

The protein localises to the plastid. It localises to the chloroplast thylakoid membrane. The enzyme catalyses 2 a plastoquinone + 4 hnu + 2 H2O = 2 a plastoquinol + O2. Functionally, photosystem II (PSII) is a light-driven water:plastoquinone oxidoreductase that uses light energy to abstract electrons from H(2)O, generating O(2) and a proton gradient subsequently used for ATP formation. It consists of a core antenna complex that captures photons, and an electron transfer chain that converts photonic excitation into a charge separation. The D1/D2 (PsbA/PsbD) reaction center heterodimer binds P680, the primary electron donor of PSII as well as several subsequent electron acceptors. This chain is Photosystem II protein D1, found in Lemna minor (Common duckweed).